We begin with the raw amino-acid sequence, 503 residues long: NAD(P)H-quinone oxidoreductase chain 4, chloroplastic (503 aa).

14 helical membrane passes run 3-23 (FFPW…IVFF), 37-57 (LCIC…HFQV), 84-104 (GLSV…TLAA), 113-130 (LFHF…GLFA), 134-154 (LFLF…LLSM), 167-187 (FILY…GLTL), 208-228 (ALEI…SPIL), 242-262 (HYST…YGLI), 274-294 (SLFS…AALT), 305-325 (IAYS…SMTD), 330-350 (GALL…FLAG), 385-405 (SLAL…FGII), 416-436 (ILIS…SLSM), and 462-482 (LFLS…PDFV).

Belongs to the complex I subunit 4 family.

The protein resides in the plastid. Its subcellular location is the chloroplast thylakoid membrane. It carries out the reaction a plastoquinone + NADH + (n+1) H(+)(in) = a plastoquinol + NAD(+) + n H(+)(out). The catalysed reaction is a plastoquinone + NADPH + (n+1) H(+)(in) = a plastoquinol + NADP(+) + n H(+)(out). This chain is NAD(P)H-quinone oxidoreductase chain 4, chloroplastic, found in Ipomoea purpurea (Common morning glory).